Here is a 353-residue protein sequence, read N- to C-terminus: Photosystem II D2 protein (353 aa).

T2 carries the post-translational modification N-acetylthreonine. T2 is subject to Phosphothreonine. A helical membrane pass occupies residues 41 to 61 (CAYFALGGWFTGTTFVTSWYT). Position 118 (H118) interacts with chlorophyll a. A helical membrane pass occupies residues 125–141 (GFMLRQFELARSVQLRP). 2 residues coordinate pheophytin a: Q130 and N143. Residues 153–166 (VFVSVFLIYPLGQS) form a helical membrane-spanning segment. H198 is a chlorophyll a binding site. The helical transmembrane segment at 208 to 228 (AALLCAIHGATVENTLFEDGD) threads the bilayer. A plastoquinone contacts are provided by H215 and F262. Fe cation is bound at residue H215. H269 is a Fe cation binding site. Residues 279–295 (GLWMSAIGVVGLALNLR) form a helical membrane-spanning segment.

The protein belongs to the reaction center PufL/M/PsbA/D family. PSII is composed of 1 copy each of membrane proteins PsbA, PsbB, PsbC, PsbD, PsbE, PsbF, PsbH, PsbI, PsbJ, PsbK, PsbL, PsbM, PsbT, PsbX, PsbY, PsbZ, Psb30/Ycf12, at least 3 peripheral proteins of the oxygen-evolving complex and a large number of cofactors. It forms dimeric complexes. The D1/D2 heterodimer binds P680, chlorophylls that are the primary electron donor of PSII, and subsequent electron acceptors. It shares a non-heme iron and each subunit binds pheophytin, quinone, additional chlorophylls, carotenoids and lipids. There is also a Cl(-1) ion associated with D1 and D2, which is required for oxygen evolution. The PSII complex binds additional chlorophylls, carotenoids and specific lipids. serves as cofactor.

It is found in the plastid. The protein localises to the chloroplast thylakoid membrane. It catalyses the reaction 2 a plastoquinone + 4 hnu + 2 H2O = 2 a plastoquinol + O2. Its function is as follows. Photosystem II (PSII) is a light-driven water:plastoquinone oxidoreductase that uses light energy to abstract electrons from H(2)O, generating O(2) and a proton gradient subsequently used for ATP formation. It consists of a core antenna complex that captures photons, and an electron transfer chain that converts photonic excitation into a charge separation. The D1/D2 (PsbA/PsbD) reaction center heterodimer binds P680, the primary electron donor of PSII as well as several subsequent electron acceptors. D2 is needed for assembly of a stable PSII complex. The chain is Photosystem II D2 protein from Cryptomeria japonica (Japanese cedar).